A 130-amino-acid chain; its full sequence is Small ribosomal subunit protein uS9 (130 aa).

The protein belongs to the universal ribosomal protein uS9 family.

The polypeptide is Small ribosomal subunit protein uS9 (Salmonella paratyphi A (strain AKU_12601)).